A 236-amino-acid polypeptide reads, in one-letter code: Small ribosomal subunit protein uS3 (236 aa).

Residues 39-107 (IREFLTEELK…DTSLNIVEVR (69 aa)) form the KH type-2 domain. The segment at 214-236 (ASERRAVEGDNQGSSSNRRRENA) is disordered.

It belongs to the universal ribosomal protein uS3 family. In terms of assembly, part of the 30S ribosomal subunit. Forms a tight complex with proteins S10 and S14.

Binds the lower part of the 30S subunit head. Binds mRNA in the 70S ribosome, positioning it for translation. The polypeptide is Small ribosomal subunit protein uS3 (Brucella canis (strain ATCC 23365 / NCTC 10854 / RM-666)).